The sequence spans 464 residues: Siroheme synthase (464 aa).

The precorrin-2 dehydrogenase /sirohydrochlorin ferrochelatase stretch occupies residues 1-203 (MEFLPLFHNL…GQGAEAERML (203 aa)). NAD(+) is bound by residues 22–23 (EI) and 43–44 (PE). Serine 128 carries the phosphoserine modification. Residues 216–464 (GEVYLVGAGP…AWFEGAQATL (249 aa)) form a uroporphyrinogen-III C-methyltransferase region. Proline 225 is a binding site for S-adenosyl-L-methionine. Aspartate 248 functions as the Proton acceptor in the catalytic mechanism. Lysine 270 serves as the catalytic Proton donor. S-adenosyl-L-methionine-binding positions include 301–303 (GGD), isoleucine 306, 331–332 (TA), methionine 383, and glycine 412.

The protein in the N-terminal section; belongs to the precorrin-2 dehydrogenase / sirohydrochlorin ferrochelatase family. In the C-terminal section; belongs to the precorrin methyltransferase family.

It catalyses the reaction uroporphyrinogen III + 2 S-adenosyl-L-methionine = precorrin-2 + 2 S-adenosyl-L-homocysteine + H(+). The enzyme catalyses precorrin-2 + NAD(+) = sirohydrochlorin + NADH + 2 H(+). It carries out the reaction siroheme + 2 H(+) = sirohydrochlorin + Fe(2+). The protein operates within cofactor biosynthesis; adenosylcobalamin biosynthesis; precorrin-2 from uroporphyrinogen III: step 1/1. Its pathway is cofactor biosynthesis; adenosylcobalamin biosynthesis; sirohydrochlorin from precorrin-2: step 1/1. It functions in the pathway porphyrin-containing compound metabolism; siroheme biosynthesis; precorrin-2 from uroporphyrinogen III: step 1/1. It participates in porphyrin-containing compound metabolism; siroheme biosynthesis; siroheme from sirohydrochlorin: step 1/1. The protein operates within porphyrin-containing compound metabolism; siroheme biosynthesis; sirohydrochlorin from precorrin-2: step 1/1. In terms of biological role, multifunctional enzyme that catalyzes the SAM-dependent methylations of uroporphyrinogen III at position C-2 and C-7 to form precorrin-2 via precorrin-1. Then it catalyzes the NAD-dependent ring dehydrogenation of precorrin-2 to yield sirohydrochlorin. Finally, it catalyzes the ferrochelation of sirohydrochlorin to yield siroheme. This is Siroheme synthase from Pseudomonas syringae pv. syringae (strain B728a).